Reading from the N-terminus, the 339-residue chain is Ketol-acid reductoisomerase (NADP(+)) (339 aa).

The KARI N-terminal Rossmann domain maps to 1–182 (MRVYYDRDAD…GGGRSGIIET (182 aa)). NADP(+) contacts are provided by residues 24 to 27 (YGSQ), Lys48, Ser51, Thr53, and 83 to 86 (DELQ). The active site involves His108. An NADP(+)-binding site is contributed by Gly134. Residues 183–328 (NFKEECETDL…AKLRGMMPWI (146 aa)) enclose the KARI C-terminal knotted domain. 4 residues coordinate Mg(2+): Asp191, Glu195, Glu227, and Glu231. Residue Ser252 coordinates substrate.

Belongs to the ketol-acid reductoisomerase family. The cofactor is Mg(2+).

It catalyses the reaction (2R)-2,3-dihydroxy-3-methylbutanoate + NADP(+) = (2S)-2-acetolactate + NADPH + H(+). The catalysed reaction is (2R,3R)-2,3-dihydroxy-3-methylpentanoate + NADP(+) = (S)-2-ethyl-2-hydroxy-3-oxobutanoate + NADPH + H(+). It functions in the pathway amino-acid biosynthesis; L-isoleucine biosynthesis; L-isoleucine from 2-oxobutanoate: step 2/4. Its pathway is amino-acid biosynthesis; L-valine biosynthesis; L-valine from pyruvate: step 2/4. In terms of biological role, involved in the biosynthesis of branched-chain amino acids (BCAA). Catalyzes an alkyl-migration followed by a ketol-acid reduction of (S)-2-acetolactate (S2AL) to yield (R)-2,3-dihydroxy-isovalerate. In the isomerase reaction, S2AL is rearranged via a Mg-dependent methyl migration to produce 3-hydroxy-3-methyl-2-ketobutyrate (HMKB). In the reductase reaction, this 2-ketoacid undergoes a metal-dependent reduction by NADPH to yield (R)-2,3-dihydroxy-isovalerate. The protein is Ketol-acid reductoisomerase (NADP(+)) of Agrobacterium fabrum (strain C58 / ATCC 33970) (Agrobacterium tumefaciens (strain C58)).